A 206-amino-acid chain; its full sequence is LexA repressor (206 aa).

A DNA-binding region (H-T-H motif) is located at residues 28 to 48; that stretch reads VREIGQAVGLASSSTVHGHLS. Active-site for autocatalytic cleavage activity residues include serine 128 and lysine 166.

It belongs to the peptidase S24 family. In terms of assembly, homodimer.

It catalyses the reaction Hydrolysis of Ala-|-Gly bond in repressor LexA.. In terms of biological role, represses a number of genes involved in the response to DNA damage (SOS response), including recA and lexA. In the presence of single-stranded DNA, RecA interacts with LexA causing an autocatalytic cleavage which disrupts the DNA-binding part of LexA, leading to derepression of the SOS regulon and eventually DNA repair. The polypeptide is LexA repressor (Bacillus thuringiensis (strain Al Hakam)).